The chain runs to 1977 residues: Protein rotatin homolog (1977 aa).

Residues 141 to 166 (SVSSLSSNDIPSQATESADSSSNQIY) are disordered.

It belongs to the rotatin family. In terms of assembly, interacts with Rcd4;this complex is recruited to daughter centrioles before their conversion to centrosomes.

The protein resides in the cytoplasm. The protein localises to the cytoskeleton. It is found in the microtubule organizing center. Its subcellular location is the centrosome. It localises to the centriole. In terms of biological role, participes in the structural integrity of both centrioles and basal bodies and in centriole cohesion. Participates in the later stages of centriole assembly through the interaction with Rcd4 leading to the centriole to centrosome conversion. This is Protein rotatin homolog from Drosophila melanogaster (Fruit fly).